The sequence spans 353 residues: Protein pelota homolog (353 aa).

This sequence belongs to the eukaryotic release factor 1 family. Pelota subfamily. Monomer. It depends on a divalent metal cation as a cofactor.

The protein localises to the cytoplasm. Functionally, may function in recognizing stalled ribosomes, interact with stem-loop structures in stalled mRNA molecules, and effect endonucleolytic cleavage of the mRNA. May play a role in the release non-functional ribosomes and degradation of damaged mRNAs. Has endoribonuclease activity. In Methanothermobacter thermautotrophicus (strain ATCC 29096 / DSM 1053 / JCM 10044 / NBRC 100330 / Delta H) (Methanobacterium thermoautotrophicum), this protein is Protein pelota homolog.